The chain runs to 519 residues: Pleckstrin homology domain-containing family A member 8 (519 aa).

The PH domain occupies 1–93 (MEGVLYKWTN…WLVALGSAKA (93 aa)). Phosphothreonine is present on Thr139. A Phosphoserine modification is found at Ser145. Thr153 bears the Phosphothreonine mark. The disordered stretch occupies residues 275-302 (GEENLESHDKDPAQPGSDSVCSPESPWE). The tract at residues 330-473 (IPTEAFLASC…EDFVAALTIK (144 aa)) is glycolipid transfer protein homology domain.

In terms of assembly, homodimer. Interacts with ARF1; the interaction together with phosphatidylinositol 4-phosphate binding is required for FAPP2 GlcCer transfer ability.

It localises to the golgi apparatus. Its subcellular location is the trans-Golgi network membrane. The protein localises to the membrane. Its function is as follows. Cargo transport protein that is required for apical transport from the trans-Golgi network (TGN). Transports AQP2 from the trans-Golgi network (TGN) to sites of AQP2 phosphorylation. Mediates the non-vesicular transport of glucosylceramide (GlcCer) from the trans-Golgi network (TGN) to the plasma membrane and plays a pivotal role in the synthesis of complex glycosphingolipids. Binding of both phosphatidylinositol 4-phosphate (PIP) and ARF1 are essential for the GlcCer transfer ability. Also required for primary cilium formation, possibly by being involved in the transport of raft lipids to the apical membrane, and for membrane tubulation. The sequence is that of Pleckstrin homology domain-containing family A member 8 (Plekha8) from Mus musculus (Mouse).